A 476-amino-acid polypeptide reads, in one-letter code: Argininosuccinate lyase (476 aa).

It belongs to the lyase 1 family. Argininosuccinate lyase subfamily.

The protein localises to the cytoplasm. The enzyme catalyses 2-(N(omega)-L-arginino)succinate = fumarate + L-arginine. Its pathway is amino-acid biosynthesis; L-arginine biosynthesis; L-arginine from L-ornithine and carbamoyl phosphate: step 3/3. This chain is Argininosuccinate lyase, found in Gluconacetobacter diazotrophicus (strain ATCC 49037 / DSM 5601 / CCUG 37298 / CIP 103539 / LMG 7603 / PAl5).